A 2645-amino-acid polypeptide reads, in one-letter code: Non-reducing polyketide synthase AC (2645 aa).

An N-terminal acylcarrier protein transacylase domain (SAT) region spans residues 73–2366; that stretch reads ALQNLNEWLK…TDIVHNAWPM (2294 aa). Residue H260 is the Proton donor/acceptor; for transacylase activity of the active site. Residues 416 to 834 form the Ketosynthase family 3 (KS3) domain; sequence DDKIAVIGMA…GSNSSLVVTE (419 aa). Residues C583, H718, and H757 each act as for beta-ketoacyl synthase activity in the active site. The interval 943-1252 is malonyl-CoA:ACP transacylase (MAT) domain; it reads CFGGQISTYI…HAVSITTDKS (310 aa). An N-terminal hotdog fold region spans residues 1324 to 1457; that stretch reads SKGFTSFAGY…GVCSFCSATD (134 aa). A PKS/mFAS DH domain is found at 1324 to 1637; that stretch reads SKGFTSFAGY…YNKVPLPVMR (314 aa). The tract at residues 1330–1641 is product template (PT) domain; it reads FAGYIDGNQR…PLPVMRGILG (312 aa). The active-site Proton acceptor; for dehydratase activity is H1359. The interval 1487 to 1637 is C-terminal hotdog fold; that stretch reads NIMQGTANIY…YNKVPLPVMR (151 aa). D1542 acts as the Proton donor; for dehydratase activity in catalysis. Residues 1684–1696 are compositionally biased toward polar residues; it reads NGTTGTENPQIKS. The disordered stretch occupies residues 1684 to 1716; the sequence is NGTTGTENPQIKSKTNKVKKVPTRKSGGSDLET. Basic residues predominate over residues 1697–1706; sequence KTNKVKKVPT. In terms of domain architecture, Carrier spans 1711–1788; the sequence is GSDLETPAKT…SLVKYIREIR (78 aa). Position 1748 is an O-(pantetheine 4'-phosphoryl)serine (S1748). A compositionally biased stretch (acidic residues) spans 1794–1805; the sequence is QNVDDSESESEE. A disordered region spans residues 1794 to 1816; it reads QNVDDSESESEELQQQATPIDSA. Y2009 functions as the For methyltransferase activity in the catalytic mechanism. The methyltransferase (CMeT) domain stretch occupies residues 2023 to 2197; the sequence is EVFVEKIGSS…SVGYGHVDWT (175 aa). The segment at 2269 to 2573 is NADPH-binding (R) domain; the sequence is CVLITGATGS…NIIPFYDWVQ (305 aa).

Its pathway is mycotoxin biosynthesis. Its function is as follows. Non-reducing polyketide synthase; part of the gene cluster that mediates the biosynthesis of the selective antifungal agent ascochitine, an o-quinone methide that plays a possible protective role against other microbial competitors in nature and is considered to be important for pathogenicity of legume-associated Didymella species. The pathway probably begins with the synthesis of a keto-aldehyde intermediate by the ascochitine non-reducing polyketide synthase pksAC from successive condensations of 4 malonyl-CoA units, presumably with a simple acetyl-CoA starter unit. Release of the keto-aldehyde intermediate is consistent with the presence of the C-terminal reductive release domain. The HR-PKS (orf7) probably makes a diketide starter unit which is passed to the non-reducing polyketide synthase pksAC for further extension, producing ascochital and ascochitine. The aldehyde dehydrogenase (orf1), the 2-oxoglutarate-dependent dioxygenase (orf3) and the dehydrogenase (orf9) are probably involved in subsequent oxidations of methyl groups to the carboxylic acid of the heterocyclic ring. The ascochitine gene cluster also includes a gene encoding a short peptide (orf2) that is often found in secondary metabolite gene clusters and which function has still to be determined. The protein is Non-reducing polyketide synthase AC of Didymella fabae (Leaf and pod spot disease fungus).